The following is a 253-amino-acid chain: 3-deoxy-manno-octulosonate cytidylyltransferase (253 aa).

The protein belongs to the KdsB family.

It is found in the cytoplasm. The enzyme catalyses 3-deoxy-alpha-D-manno-oct-2-ulosonate + CTP = CMP-3-deoxy-beta-D-manno-octulosonate + diphosphate. It participates in nucleotide-sugar biosynthesis; CMP-3-deoxy-D-manno-octulosonate biosynthesis; CMP-3-deoxy-D-manno-octulosonate from 3-deoxy-D-manno-octulosonate and CTP: step 1/1. Its pathway is bacterial outer membrane biogenesis; lipopolysaccharide biosynthesis. In terms of biological role, activates KDO (a required 8-carbon sugar) for incorporation into bacterial lipopolysaccharide in Gram-negative bacteria. The polypeptide is 3-deoxy-manno-octulosonate cytidylyltransferase (Proteus mirabilis (strain HI4320)).